A 278-amino-acid polypeptide reads, in one-letter code: Cyclin-C (278 aa).

The Cyclin N-terminal domain maps to Asn-41–Glu-139. The disordered stretch occupies residues Thr-247 to Ser-278. Residues Pro-267–Ser-278 are compositionally biased toward polar residues. Phosphoserine is present on Ser-270.

Belongs to the cyclin family. Cyclin C subfamily. Component of the Mediator complex, which is composed of MED1, MED4, MED6, MED7, MED8, MED9, MED10, MED11, MED12, MED13, MED13L, MED14, MED15, MED16, MED17, MED18, MED19, MED20, MED21, MED22, MED23, MED24, MED25, MED26, MED27, MED29, MED30, MED31, CCNC, CDK8 and CDC2L6/CDK11. The MED12, MED13, CCNC and CDK8 subunits form a distinct module termed the CDK8 module. Mediator containing the CDK8 module is less active than Mediator lacking this module in supporting transcriptional activation. Individual preparations of the Mediator complex lacking one or more distinct subunits have been variously termed ARC, CRSP, DRIP, PC2, SMCC and TRAP. The cylin/CDK pair formed by CCNC/CDK8 also associates with the large subunit of RNA polymerase II.

It localises to the nucleus. In terms of biological role, component of the Mediator complex, a coactivator involved in regulated gene transcription of nearly all RNA polymerase II-dependent genes. Mediator functions as a bridge to convey information from gene-specific regulatory proteins to the basal RNA polymerase II transcription machinery. Mediator is recruited to promoters by direct interactions with regulatory proteins and serves as a scaffold for the assembly of a functional preinitiation complex with RNA polymerase II and the general transcription factors. Binds to and activates cyclin-dependent kinase CDK8 that phosphorylates the CTD (C-terminal domain) of the large subunit of RNA polymerase II (RNAp II), which may inhibit the formation of a transcription initiation complex. This is Cyclin-C (Ccnc) from Rattus norvegicus (Rat).